Reading from the N-terminus, the 425-residue chain is Peroxisomal membrane protein PEX14 (425 aa).

Disordered regions lie at residues R49–A89 and D247–S425. The segment covering S56–A76 has biased composition (low complexity). An SH3-binding motif is present at residues A89–W97. The span at P256–S297 shows a compositional bias: polar residues. Composition is skewed to basic and acidic residues over residues D315 to T324 and L333 to D366.

It belongs to the peroxin-14 family. Interacts with PEX13 (via SH3 domain); forming the PEX13-PEX14 docking complex. Interacts with PEX5 (via WxxxF/Y motifs). Interacts with PEX20 (via WxxxF/Y motifs). Interacts with PEX3, PEX7, PEX8 and PEX17. Phosphorylated on serine or threonine residues.

The protein resides in the peroxisome membrane. Component of the PEX13-PEX14 docking complex, a translocon channel that specifically mediates the import of peroxisomal cargo proteins bound to PEX5 or PEX20 receptors. The PEX13-PEX14 docking complex forms a large import pore which can be opened to a diameter of about 9 nm. Mechanistically, PEX5 (or PEX20) receptor along with cargo proteins associates with the PEX14 subunit of the PEX13-PEX14 docking complex in the cytosol, leading to the insertion of the receptor into the organelle membrane with the concomitant translocation of the cargo into the peroxisome matrix. This is Peroxisomal membrane protein PEX14 from Komagataella pastoris (Yeast).